The following is a 343-amino-acid chain: Probable magnesium transporter NIPA4 (343 aa).

The Extracellular portion of the chain corresponds to Met1–Asp18. The chain crosses the membrane as a helical span at residues Asn19–Val39. Over Lys40 to Leu66 the chain is Cytoplasmic. A helical membrane pass occupies residues Trp67 to Phe87. Residues Ala88–Ala90 lie on the Extracellular side of the membrane. A helical transmembrane segment spans residues Ile91–Ile111. The Cytoplasmic portion of the chain corresponds to Leu112 to Lys115. The helical transmembrane segment at Leu116 to Leu136 threads the bilayer. Topologically, residues His137 to Pro157 are extracellular. The helical transmembrane segment at Ala158–Val178 threads the bilayer. Residues Pro179–Tyr189 are Cytoplasmic-facing. A helical transmembrane segment spans residues Ile190–Ala210. The Extracellular segment spans residues Leu211–Gln220. The helical transmembrane segment at Leu221–Leu241 threads the bilayer. Topologically, residues Asn242–Ala254 are cytoplasmic. Residues Ile255–Met275 traverse the membrane as a helical segment. The Extracellular portion of the chain corresponds to Phe276–Asn283. A helical membrane pass occupies residues Gly284 to Leu304. Residues His305–Pro343 are Cytoplasmic-facing.

It belongs to the NIPA (TC 2.A.7) family. In terms of assembly, homodimer.

The protein localises to the cell membrane. The protein resides in the early endosome. In terms of biological role, acts as a Mg(2+) transporter. Can also transport other divalent cations such as Fe(2+), Sr(2+), Ba(2+), Mn(2+) and Co(2+) but to a much less extent than Mg(2+). The sequence is that of Probable magnesium transporter NIPA4 from Arabidopsis thaliana (Mouse-ear cress).